Reading from the N-terminus, the 339-residue chain is Putative ABC transporter ATP-binding protein MG467 homolog (339 aa).

Residues 41–87 (KKTKKAKPAKVKKVKEPKAKAVKPEQVKPTKTTKAPKPKKPKKQGGL) are disordered. The segment covering 42–53 (KTKKAKPAKVKK) has biased composition (basic residues). Residues 54–68 (VKEPKAKAVKPEQVK) show a composition bias toward basic and acidic residues. The segment covering 74–83 (KAPKPKKPKK) has biased composition (basic residues). The region spanning 112–338 (ISIDKMWKHV…IVSNELVRPL (227 aa)) is the ABC transporter domain. 150-157 (GPSGSGKT) is an ATP binding site.

The protein belongs to the ABC transporter superfamily.

This is Putative ABC transporter ATP-binding protein MG467 homolog from Mycoplasma pneumoniae (strain ATCC 29342 / M129 / Subtype 1) (Mycoplasmoides pneumoniae).